Here is a 207-residue protein sequence, read N- to C-terminus: Large ribosomal subunit protein uL4 (207 aa).

The segment at 57-78 (VAGGGKKPWRQKGTGRARHGSI) is disordered. Positions 63 to 77 (KPWRQKGTGRARHGS) are enriched in basic residues.

It belongs to the universal ribosomal protein uL4 family. In terms of assembly, part of the 50S ribosomal subunit.

Its function is as follows. One of the primary rRNA binding proteins, this protein initially binds near the 5'-end of the 23S rRNA. It is important during the early stages of 50S assembly. It makes multiple contacts with different domains of the 23S rRNA in the assembled 50S subunit and ribosome. Functionally, forms part of the polypeptide exit tunnel. This Onion yellows phytoplasma (strain OY-M) protein is Large ribosomal subunit protein uL4.